Consider the following 703-residue polypeptide: Polyribonucleotide nucleotidyltransferase (703 aa).

Residues Asp-488 and Asp-494 each coordinate Mg(2+). The 60-residue stretch at 555–614 (PRLYVMKINPEKIRDVIGKGGAVIRALTEETGTQINIEEDGTITIASNDSAKADEAKRRI) folds into the KH domain. Residues 624-692 (GKVYEGAITK…EKGRVKLSMK (69 aa)) form the S1 motif domain.

It belongs to the polyribonucleotide nucleotidyltransferase family. Mg(2+) serves as cofactor.

The protein localises to the cytoplasm. The enzyme catalyses RNA(n+1) + phosphate = RNA(n) + a ribonucleoside 5'-diphosphate. Its function is as follows. Involved in mRNA degradation. Catalyzes the phosphorolysis of single-stranded polyribonucleotides processively in the 3'- to 5'-direction. The protein is Polyribonucleotide nucleotidyltransferase of Polaromonas naphthalenivorans (strain CJ2).